The primary structure comprises 49 residues: SPbeta prophage-derived uncharacterized protein YoqT (49 aa).

The chain crosses the membrane as a helical span at residues 7–29; that stretch reads CFVNWSFDKIMDYILIAGLYFVF.

It localises to the cell membrane. This chain is SPbeta prophage-derived uncharacterized protein YoqT (yoqT), found in Bacillus subtilis (strain 168).